Reading from the N-terminus, the 417-residue chain is Serine hydroxymethyltransferase (417 aa).

Residues Leu121 and 125–127 (GHL) contribute to the (6S)-5,6,7,8-tetrahydrofolate site. Lys229 carries the post-translational modification N6-(pyridoxal phosphate)lysine. Residue 355–357 (SPF) participates in (6S)-5,6,7,8-tetrahydrofolate binding.

It belongs to the SHMT family. As to quaternary structure, homodimer. Pyridoxal 5'-phosphate serves as cofactor.

It is found in the cytoplasm. The catalysed reaction is (6R)-5,10-methylene-5,6,7,8-tetrahydrofolate + glycine + H2O = (6S)-5,6,7,8-tetrahydrofolate + L-serine. The protein operates within one-carbon metabolism; tetrahydrofolate interconversion. Its pathway is amino-acid biosynthesis; glycine biosynthesis; glycine from L-serine: step 1/1. In terms of biological role, catalyzes the reversible interconversion of serine and glycine with tetrahydrofolate (THF) serving as the one-carbon carrier. This reaction serves as the major source of one-carbon groups required for the biosynthesis of purines, thymidylate, methionine, and other important biomolecules. Also exhibits THF-independent aldolase activity toward beta-hydroxyamino acids, producing glycine and aldehydes, via a retro-aldol mechanism. The polypeptide is Serine hydroxymethyltransferase (Shewanella amazonensis (strain ATCC BAA-1098 / SB2B)).